Here is an 89-residue protein sequence, read N- to C-terminus: Small ribosomal subunit protein uS15 (89 aa).

Belongs to the universal ribosomal protein uS15 family. Part of the 30S ribosomal subunit. Forms a bridge to the 50S subunit in the 70S ribosome, contacting the 23S rRNA.

Its function is as follows. One of the primary rRNA binding proteins, it binds directly to 16S rRNA where it helps nucleate assembly of the platform of the 30S subunit by binding and bridging several RNA helices of the 16S rRNA. Functionally, forms an intersubunit bridge (bridge B4) with the 23S rRNA of the 50S subunit in the ribosome. The protein is Small ribosomal subunit protein uS15 of Hahella chejuensis (strain KCTC 2396).